We begin with the raw amino-acid sequence, 235 residues long: uncharacterized protein (235 aa).

This is an uncharacterized protein from Salmonella typhimurium (strain LT2 / SGSC1412 / ATCC 700720).